Consider the following 2157-residue polypeptide: Unconventional myosin-IXb (2157 aa).

N-acetylserine is present on serine 2. The region spanning 15 to 114 (AAYHLHIYPQ…YYFLLQERNA (100 aa)) is the Ras-associating domain. The region spanning 146-953 (ADFDDLCNLP…ERQALQETLH (808 aa)) is the Myosin motor domain. 239–246 (GESGSGKT) contacts ATP. Residues 709–734 (AEKAAGMSSPGAQSHPEELPRGASTP) are disordered. Phosphoserine is present on residues serine 716 and serine 717. The actin-binding stretch occupies residues 844–855 (KAEPFFIRCIRS). A neck or regulatory domain region spans residues 940-1044 (LKETERQALQ…CRGHLQRKSF (105 aa)). IQ domains lie at 957 to 977 (VRKI…RHFL), 979 to 1000 (MKRA…RALE), 1001 to 1023 (RTQA…LYRH), and 1024 to 1053 (QKQS…EKQK). Residue serine 1045 is modified to Phosphoserine. Residues 1045–2157 (SQMISEKQKA…LPPASGQTNG (1113 aa)) form a tail region. Positions 1046–1071 (QMISEKQKAEEKEREALEAARAGAEE) form a coiled coil. Disordered regions lie at residues 1046-1298 (QMIS…TQIQ), 1320-1410 (AAAS…GSQV), and 1455-1484 (GLEA…KKNR). 5 stretches are compositionally biased toward basic and acidic residues: residues 1050–1063 (EKQK…EALE), 1109–1122 (SPLE…EAPS), 1136–1160 (ESHE…EHVK), 1168–1183 (SCKE…RRVT), and 1191–1201 (LEDKKESREDE). 3 positions are modified to phosphoserine: serine 1114, serine 1115, and serine 1122. Polar residues predominate over residues 1211 to 1222 (ENTSQKQPTEQP). Serine 1242, serine 1253, serine 1261, and serine 1267 each carry phosphoserine. Threonine 1271 bears the Phosphothreonine mark. A phosphoserine mark is found at serine 1290, serine 1323, and serine 1331. Residue threonine 1346 is modified to Phosphothreonine. Residues serine 1354, serine 1356, and serine 1405 each carry the phosphoserine modification. A compositionally biased stretch (basic and acidic residues) spans 1467–1478 (AAGEKRTKEPGG). The segment at 1632–1681 (GHVFASYQVSIPQSCEQCLSYIWLMDKALLCSVCKMTCHKKCVHKIQSHC) adopts a Phorbol-ester/DAG-type zinc-finger fold. One can recognise a Rho-GAP domain in the interval 1703–1888 (DSLTSDKASV…MLIKEQMRKY (186 aa)). The segment at 1739 to 1744 (AANRTR) is interaction with RHOA. Residues 1880–1901 (LIKEQMRKYKVKMEEISQLEAA) adopt a coiled-coil conformation. Phosphoserine occurs at positions 1926, 1972, 1992, and 1999. Positions 1959-1989 (EDREKEILIERIQSIKEEKEDITYRLPELDP) form a coiled coil. Residues 1980-1993 (ITYRLPELDPRGSD) show a composition bias toward basic and acidic residues. The interval 1980 to 2157 (ITYRLPELDP…LPPASGQTNG (178 aa)) is disordered. Phosphothreonine is present on threonine 2005. Over residues 2021–2037 (PPAPALPCPGAPTPSPL) the composition is skewed to pro residues. Position 2050 is a phosphoserine (serine 2050). The segment covering 2081 to 2093 (PRWAPGAREAAAP) has biased composition (low complexity). A compositionally biased stretch (basic and acidic residues) spans 2095–2106 (RRREPPARRPDQ). Residue serine 2141 is modified to Phosphoserine.

Belongs to the TRAFAC class myosin-kinesin ATPase superfamily. Myosin family. Interacts (via IQ domains) with CALM. Interacts with RHOA. Interacts (via Rho-GAP domain) with ROBO1; this inhibits the interaction with RHOA and the stimulation of RHOA GTPase activity, and thereby increases the levels of active RHOA. In terms of tissue distribution, detected in peripheral blood leukocytes (at protein level). Expressed predominantly in peripheral blood leukocytes and at lower levels, in thymus, spleen, testis, prostate, ovary, brain, small intestine and lung.

Its subcellular location is the cytoplasm. The protein localises to the cell cortex. It is found in the perinuclear region. The protein resides in the cytoskeleton. In terms of biological role, myosins are actin-based motor molecules with ATPase activity. Unconventional myosins serve in intracellular movements. Binds actin with high affinity both in the absence and presence of ATP and its mechanochemical activity is inhibited by calcium ions. Also acts as a GTPase activator for RHOA. Plays a role in the regulation of cell migration via its role as RHOA GTPase activator. This is regulated by its interaction with the SLIT2 receptor ROBO1; interaction with ROBO1 impairs interaction with RHOA and subsequent activation of RHOA GTPase activity, and thereby leads to increased levels of active, GTP-bound RHOA. The polypeptide is Unconventional myosin-IXb (MYO9B) (Homo sapiens (Human)).